The following is a 143-amino-acid chain: Ribosome maturation factor RimP (143 aa).

The protein belongs to the RimP family.

It localises to the cytoplasm. In terms of biological role, required for maturation of 30S ribosomal subunits. The chain is Ribosome maturation factor RimP from Neisseria meningitidis serogroup C / serotype 2a (strain ATCC 700532 / DSM 15464 / FAM18).